The following is a 147-amino-acid chain: Large ribosomal subunit protein bL9 (147 aa).

It belongs to the bacterial ribosomal protein bL9 family.

Functionally, binds to the 23S rRNA. The protein is Large ribosomal subunit protein bL9 of Campylobacter jejuni subsp. jejuni serotype O:6 (strain 81116 / NCTC 11828).